The following is a 360-amino-acid chain: Cuticle collagen dpy-2 (360 aa).

3 triple-helical region regions span residues 123 to 152 (GERG…PGTT), 174 to 230 (GPRG…KGRT), and 238 to 303 (GPPG…PGTC). Disordered regions lie at residues 127 to 158 (PSGD…ASCI) and 174 to 360 (GPRG…IRKW). Residues 189-198 (GEYGIGGRPG) are compositionally biased toward gly residues. Positions 242-258 (DSGLPGPWGPPGSAGMP) are enriched in low complexity. The segment covering 273–288 (PGPPGAPGPGGMPGPN) has biased composition (pro residues).

It belongs to the cuticular collagen family. As to quaternary structure, collagen polypeptide chains are complexed within the cuticle by disulfide bonds and other types of covalent cross-links.

Functionally, nematode cuticles are composed largely of collagen-like proteins. The cuticle functions both as an exoskeleton and as a barrier to protect the worm from its environment. Mutations in dpy-2 affects the body shape. The chain is Cuticle collagen dpy-2 (dpy-2) from Caenorhabditis elegans.